Reading from the N-terminus, the 207-residue chain is ATP-dependent dethiobiotin synthetase BioD (207 aa).

13–18 (EVGKTV) contributes to the ATP binding site. Mg(2+) is bound at residue T17. K33 is an active-site residue. Residues D44 and 100–103 (EGAG) contribute to the ATP site. Mg(2+) is bound by residues D44 and E100.

The protein belongs to the dethiobiotin synthetase family. Homodimer. It depends on Mg(2+) as a cofactor.

It is found in the cytoplasm. The catalysed reaction is (7R,8S)-7,8-diammoniononanoate + CO2 + ATP = (4R,5S)-dethiobiotin + ADP + phosphate + 3 H(+). It participates in cofactor biosynthesis; biotin biosynthesis; biotin from 7,8-diaminononanoate: step 1/2. Functionally, catalyzes a mechanistically unusual reaction, the ATP-dependent insertion of CO2 between the N7 and N8 nitrogen atoms of 7,8-diaminopelargonic acid (DAPA, also called 7,8-diammoniononanoate) to form a ureido ring. In Christiangramia forsetii (strain DSM 17595 / CGMCC 1.15422 / KT0803) (Gramella forsetii), this protein is ATP-dependent dethiobiotin synthetase BioD.